A 1235-amino-acid polypeptide reads, in one-letter code: Ubiquitin carboxyl-terminal hydrolase 40 (1235 aa).

Positions Ser-41–Ala-482 constitute a USP domain. The Nucleophile role is filled by Cys-50. His-305 serves as the catalytic Proton acceptor.

The protein belongs to the peptidase C19 family.

It catalyses the reaction Thiol-dependent hydrolysis of ester, thioester, amide, peptide and isopeptide bonds formed by the C-terminal Gly of ubiquitin (a 76-residue protein attached to proteins as an intracellular targeting signal).. The chain is Ubiquitin carboxyl-terminal hydrolase 40 (Usp40) from Mus musculus (Mouse).